The following is a 284-amino-acid chain: Bifunctional protein FolD (284 aa).

Residues 166–168 and Ile-232 each bind NADP(+); that span reads GAS.

Belongs to the tetrahydrofolate dehydrogenase/cyclohydrolase family. In terms of assembly, homodimer.

The catalysed reaction is (6R)-5,10-methylene-5,6,7,8-tetrahydrofolate + NADP(+) = (6R)-5,10-methenyltetrahydrofolate + NADPH. The enzyme catalyses (6R)-5,10-methenyltetrahydrofolate + H2O = (6R)-10-formyltetrahydrofolate + H(+). It participates in one-carbon metabolism; tetrahydrofolate interconversion. In terms of biological role, catalyzes the oxidation of 5,10-methylenetetrahydrofolate to 5,10-methenyltetrahydrofolate and then the hydrolysis of 5,10-methenyltetrahydrofolate to 10-formyltetrahydrofolate. This chain is Bifunctional protein FolD, found in Shewanella sp. (strain W3-18-1).